The following is a 379-amino-acid chain: Cobalt-precorrin-5B C(1)-methyltransferase (379 aa).

Belongs to the CbiD family.

The catalysed reaction is Co-precorrin-5B + S-adenosyl-L-methionine = Co-precorrin-6A + S-adenosyl-L-homocysteine. It functions in the pathway cofactor biosynthesis; adenosylcobalamin biosynthesis; cob(II)yrinate a,c-diamide from sirohydrochlorin (anaerobic route): step 6/10. In terms of biological role, catalyzes the methylation of C-1 in cobalt-precorrin-5B to form cobalt-precorrin-6A. The chain is Cobalt-precorrin-5B C(1)-methyltransferase from Salmonella paratyphi B (strain ATCC BAA-1250 / SPB7).